A 524-amino-acid polypeptide reads, in one-letter code: Cytochrome P450 1A1 (524 aa).

The mitochondrial targeting signal stretch occupies residues 33 to 44 (LRTQVPKGLKTP). O-linked (GlcNAc) serine glycosylation is present at Ser71. Phe228 provides a ligand contact to substrate. Heme is bound at residue Cys461.

This sequence belongs to the cytochrome P450 family. Interacts with cytosolic chaperones HSP70 and HSP90; this interaction is required for initial targeting to mitochondria. Interacts (via mitochondrial targeting signal) with TOMM40 (via N-terminus); this interaction is required for translocation across the mitochondrial outer membrane. Heme serves as cofactor.

It is found in the endoplasmic reticulum membrane. It localises to the mitochondrion inner membrane. Its subcellular location is the microsome membrane. The protein localises to the cytoplasm. It catalyses the reaction an organic molecule + reduced [NADPH--hemoprotein reductase] + O2 = an alcohol + oxidized [NADPH--hemoprotein reductase] + H2O + H(+). It carries out the reaction estrone + reduced [NADPH--hemoprotein reductase] + O2 = 2-hydroxyestrone + oxidized [NADPH--hemoprotein reductase] + H2O + H(+). The enzyme catalyses estrone + reduced [NADPH--hemoprotein reductase] + O2 = 4-hydroxyestrone + oxidized [NADPH--hemoprotein reductase] + H2O + H(+). The catalysed reaction is estrone + reduced [NADPH--hemoprotein reductase] + O2 = 6alpha-hydroxyestrone + oxidized [NADPH--hemoprotein reductase] + H2O + H(+). It catalyses the reaction estrone + reduced [NADPH--hemoprotein reductase] + O2 = 15alpha-hydroxyestrone + oxidized [NADPH--hemoprotein reductase] + H2O + H(+). It carries out the reaction estrone + reduced [NADPH--hemoprotein reductase] + O2 = 16alpha-hydroxyestrone + oxidized [NADPH--hemoprotein reductase] + H2O + H(+). The enzyme catalyses 17beta-estradiol + reduced [NADPH--hemoprotein reductase] + O2 = 2-hydroxy-17beta-estradiol + oxidized [NADPH--hemoprotein reductase] + H2O + H(+). The catalysed reaction is 17beta-estradiol + reduced [NADPH--hemoprotein reductase] + O2 = 4-hydroxy-17beta-estradiol + oxidized [NADPH--hemoprotein reductase] + H2O + H(+). It catalyses the reaction 17beta-estradiol + reduced [NADPH--hemoprotein reductase] + O2 = 6alpha-hydroxy-17beta-estradiol + oxidized [NADPH--hemoprotein reductase] + H2O + H(+). It carries out the reaction 17beta-estradiol + reduced [NADPH--hemoprotein reductase] + O2 = 7alpha-hydroxy-17beta-estradiol + oxidized [NADPH--hemoprotein reductase] + H2O + H(+). The enzyme catalyses 17beta-estradiol + reduced [NADPH--hemoprotein reductase] + O2 = 15alpha-hydroxy-17beta-estradiol + oxidized [NADPH--hemoprotein reductase] + H2O + H(+). The catalysed reaction is (5Z,8Z,11Z)-eicosatrienoate + reduced [NADPH--hemoprotein reductase] + O2 = 19-hydroxy-(5Z,8Z,11Z)-eicosatrienoate + oxidized [NADPH--hemoprotein reductase] + H2O + H(+). It catalyses the reaction (5Z,8Z,11Z,14Z)-eicosatetraenoate + reduced [NADPH--hemoprotein reductase] + O2 = 16-hydroxy-(5Z,8Z,11Z,14Z)-eicosatetraenoate + oxidized [NADPH--hemoprotein reductase] + H2O + H(+). It carries out the reaction (5Z,8Z,11Z,14Z)-eicosatetraenoate + reduced [NADPH--hemoprotein reductase] + O2 = 17-hydroxy-(5Z,8Z,11Z,14Z)-eicosatetraenoate + oxidized [NADPH--hemoprotein reductase] + H2O + H(+). The enzyme catalyses (5Z,8Z,11Z,14Z)-eicosatetraenoate + reduced [NADPH--hemoprotein reductase] + O2 = 18-hydroxy-(5Z,8Z,11Z,14Z)-eicosatetraenoate + oxidized [NADPH--hemoprotein reductase] + H2O + H(+). The catalysed reaction is (5Z,8Z,11Z,14Z)-eicosatetraenoate + reduced [NADPH--hemoprotein reductase] + O2 = 19-hydroxy-(5Z,8Z,11Z,14Z)-eicosatetraenoate + oxidized [NADPH--hemoprotein reductase] + H2O + H(+). It catalyses the reaction (5Z,8Z,11Z,14Z,17Z)-eicosapentaenoate + reduced [NADPH--hemoprotein reductase] + O2 = 19-hydroxy-(5Z,8Z,11Z,14Z,17Z)-eicosapentaenoate + oxidized [NADPH--hemoprotein reductase] + H2O + H(+). It carries out the reaction (5Z,8Z,11Z,14Z)-eicosatetraenoate + reduced [NADPH--hemoprotein reductase] + O2 = (8R,9S)-epoxy-(5Z,11Z,14Z)-eicosatrienoate + oxidized [NADPH--hemoprotein reductase] + H2O + H(+). The enzyme catalyses (5Z,8Z,11Z,14Z)-eicosatetraenoate + reduced [NADPH--hemoprotein reductase] + O2 = (11R,12S)-epoxy-(5Z,8Z,14Z)-eicosatrienoate + oxidized [NADPH--hemoprotein reductase] + H2O + H(+). The catalysed reaction is (5Z,8Z,11Z,14Z)-eicosatetraenoate + reduced [NADPH--hemoprotein reductase] + O2 = (14S,15R)-epoxy-(5Z,8Z,11Z)-eicosatrienoate + oxidized [NADPH--hemoprotein reductase] + H2O + H(+). It catalyses the reaction (5Z,8Z,11Z,14Z)-eicosatetraenoate + reduced [NADPH--hemoprotein reductase] + O2 = (14R,15S)-epoxy-(5Z,8Z,11Z)-eicosatrienoate + oxidized [NADPH--hemoprotein reductase] + H2O + H(+). It carries out the reaction (5Z,8Z,11Z,14Z,17Z)-eicosapentaenoate + reduced [NADPH--hemoprotein reductase] + O2 = (17R,18S)-epoxy-(5Z,8Z,11Z,14Z)-eicosatetraenoate + oxidized [NADPH--hemoprotein reductase] + H2O + H(+). The enzyme catalyses (4Z,7Z,10Z,13Z,16Z,19Z)-docosahexaenoate + reduced [NADPH--hemoprotein reductase] + O2 = (19S,20R)-epoxy-(4Z,7Z,10Z,13Z,16Z)-docosapentaenoate + oxidized [NADPH--hemoprotein reductase] + H2O + H(+). The catalysed reaction is (4Z,7Z,10Z,13Z,16Z,19Z)-docosahexaenoate + reduced [NADPH--hemoprotein reductase] + O2 = (19R,20S)-epoxy-(4Z,7Z,10Z,13Z,16Z)-docosapentaenoate + oxidized [NADPH--hemoprotein reductase] + H2O + H(+). It catalyses the reaction all-trans-retinol + reduced [NADPH--hemoprotein reductase] + O2 = all-trans-retinal + oxidized [NADPH--hemoprotein reductase] + 2 H2O + H(+). It carries out the reaction all-trans-retinal + reduced [NADPH--hemoprotein reductase] + O2 = all-trans-retinoate + oxidized [NADPH--hemoprotein reductase] + H2O + 2 H(+). The enzyme catalyses (13S)-hydroperoxy-(9Z,11E)-octadecadienoate = 13-oxo-(9Z,11E)-octadecadienoate + H2O. The catalysed reaction is (12S)-hydroperoxy-(5Z,8Z,10E,14Z)-eicosatetraenoate = 12-oxo-(5Z,8Z,10E,14Z)-eicosatetraenoate + H2O. It catalyses the reaction (15S)-hydroperoxy-(5Z,8Z,11Z,13E)-eicosatetraenoate = 15-oxo-(5Z,8Z,11Z,13E)-eicosatetraenoate + H2O. It carries out the reaction (5S)-hydroperoxy-(6E,8Z,11Z,14Z)-eicosatetraenoate = 5-oxo-(6E,8Z,11Z,14Z)-eicosatetraenoate + H2O. Its pathway is steroid hormone biosynthesis. It functions in the pathway lipid metabolism; fatty acid metabolism. It participates in cofactor metabolism; retinol metabolism. Functionally, a cytochrome P450 monooxygenase involved in the metabolism of various endogenous substrates, including fatty acids, steroid hormones and vitamins. Mechanistically, uses molecular oxygen inserting one oxygen atom into a substrate, and reducing the second into a water molecule, with two electrons provided by NADPH via cytochrome P450 reductase (CPR; NADPH-ferrihemoprotein reductase). Catalyzes the hydroxylation of carbon-hydrogen bonds. Exhibits high catalytic activity for the formation of hydroxyestrogens from estrone (E1) and 17beta-estradiol (E2), namely 2-hydroxy E1 and E2, as well as D-ring hydroxylated E1 and E2 at the C15alpha and C16alpha positions. Displays different regioselectivities for polyunsaturated fatty acids (PUFA) hydroxylation. Catalyzes the epoxidation of double bonds of certain PUFA. Converts arachidonic acid toward epoxyeicosatrienoic acid (EET) regioisomers, 8,9-, 11,12-, and 14,15-EET, that function as lipid mediators in the vascular system. Displays an absolute stereoselectivity in the epoxidation of eicosapentaenoic acid (EPA) producing the 17(R),18(S) enantiomer. May play an important role in all-trans retinoic acid biosynthesis in extrahepatic tissues. Catalyzes two successive oxidative transformation of all-trans retinol to all-trans retinal and then to the active form all-trans retinoic acid. May also participate in eicosanoids metabolism by converting hydroperoxide species into oxo metabolites (lipoxygenase-like reaction, NADPH-independent). This is Cytochrome P450 1A1 (CYP1A1) from Mesocricetus auratus (Golden hamster).